Consider the following 260-residue polypeptide: Thiazole synthase (260 aa).

The active-site Schiff-base intermediate with DXP is K102. Residues G163, 189-190 (AG), and 211-212 (NT) contribute to the 1-deoxy-D-xylulose 5-phosphate site.

It belongs to the ThiG family. As to quaternary structure, homotetramer. Forms heterodimers with either ThiH or ThiS.

Its subcellular location is the cytoplasm. The enzyme catalyses [ThiS sulfur-carrier protein]-C-terminal-Gly-aminoethanethioate + 2-iminoacetate + 1-deoxy-D-xylulose 5-phosphate = [ThiS sulfur-carrier protein]-C-terminal Gly-Gly + 2-[(2R,5Z)-2-carboxy-4-methylthiazol-5(2H)-ylidene]ethyl phosphate + 2 H2O + H(+). Its pathway is cofactor biosynthesis; thiamine diphosphate biosynthesis. In terms of biological role, catalyzes the rearrangement of 1-deoxy-D-xylulose 5-phosphate (DXP) to produce the thiazole phosphate moiety of thiamine. Sulfur is provided by the thiocarboxylate moiety of the carrier protein ThiS. In vitro, sulfur can be provided by H(2)S. The polypeptide is Thiazole synthase (Geotalea uraniireducens (strain Rf4) (Geobacter uraniireducens)).